A 160-amino-acid polypeptide reads, in one-letter code: 6,7-dimethyl-8-ribityllumazine synthase (160 aa).

5-amino-6-(D-ribitylamino)uracil is bound by residues W27, 59-61 (AIE), and 81-83 (VVI). Residue 86–87 (QT) participates in (2S)-2-hydroxy-3-oxobutyl phosphate binding. H89 (proton donor) is an active-site residue. N114 contributes to the 5-amino-6-(D-ribitylamino)uracil binding site. R128 contributes to the (2S)-2-hydroxy-3-oxobutyl phosphate binding site.

This sequence belongs to the DMRL synthase family. In terms of assembly, homopentamer.

The catalysed reaction is (2S)-2-hydroxy-3-oxobutyl phosphate + 5-amino-6-(D-ribitylamino)uracil = 6,7-dimethyl-8-(1-D-ribityl)lumazine + phosphate + 2 H2O + H(+). It participates in cofactor biosynthesis; riboflavin biosynthesis; riboflavin from 2-hydroxy-3-oxobutyl phosphate and 5-amino-6-(D-ribitylamino)uracil: step 1/2. Catalyzes the formation of 6,7-dimethyl-8-ribityllumazine by condensation of 5-amino-6-(D-ribitylamino)uracil with 3,4-dihydroxy-2-butanone 4-phosphate. This is the penultimate step in the biosynthesis of riboflavin. The protein is 6,7-dimethyl-8-ribityllumazine synthase of Mycobacterium avium (strain 104).